A 271-amino-acid polypeptide reads, in one-letter code: Phosphatidylinositol transfer protein alpha isoform (271 aa).

A 1,2-diacyl-sn-glycero-3-phospho-(1D-myo-inositol)-binding residues include T59, K61, E86, N90, T97, and K195. K216 carries the post-translational modification N6-acetyllysine. The span at 251–264 (TKRQLDEMRQKDPV) shows a compositional bias: basic and acidic residues. The segment at 251–271 (TKRQLDEMRQKDPVKGMTADD) is disordered.

Belongs to the PtdIns transfer protein family. PI transfer class I subfamily. Post-translationally, phosphorylated by PKC in a calcium and phosphatidylserine-dependent manner.

Its subcellular location is the cytoplasm. The protein resides in the nucleus. It catalyses the reaction a 1,2-diacyl-sn-glycero-3-phosphocholine(in) = a 1,2-diacyl-sn-glycero-3-phosphocholine(out). It carries out the reaction a 1,2-diacyl-sn-glycero-3-phospho-(1D-myo-inositol)(in) = a 1,2-diacyl-sn-glycero-3-phospho-(1D-myo-inositol)(out). Functionally, catalyzes the transfer of phosphatidylinositol (PI) and phosphatidylcholine (PC) between membranes. Shows a preference for PI and PC containing shorter saturated or monosaturated acyl chains at the sn-1 and sn-2 positions. Preference order for PC is C16:1 &gt; C16:0 &gt; C18:1 &gt; C18:0 &gt; C20:4 and for PI is C16:1 &gt; C16:0 &gt; C18:1 &gt; C18:0 &gt; C20:4 &gt; C20:3. In Mus musculus (Mouse), this protein is Phosphatidylinositol transfer protein alpha isoform (Pitpna).